A 28-amino-acid polypeptide reads, in one-letter code: Venom protein (28 aa).

The tract at residues 1 to 28 (KEGYPDGQNGKKIPCAINDNISKTXEQA) is disordered. Polar residues predominate over residues 19-28 (DNISKTXEQA).

Expressed by the venom gland.

The protein localises to the secreted. Its function is as follows. Causes symptoms of mild intoxication and transient paralysis in insects (A.domestica). In Rhopalurus junceus (Caribbean blue scorpion), this protein is Venom protein.